We begin with the raw amino-acid sequence, 362 residues long: Phospho-N-acetylmuramoyl-pentapeptide-transferase (362 aa).

Transmembrane regions (helical) follow at residues 28-48 (AACM…IRWL), 72-92 (GTPT…TLLW), 100-120 (VWAV…DDYL), 134-154 (VKLI…MSLT), 170-190 (VLIP…MGAS), 201-221 (GLAI…AYLV), 241-261 (LTVF…FNAP), 265-285 (VFMG…VAIA), 290-310 (IVLA…IVQV), and 339-359 (TIVI…LATL).

Belongs to the glycosyltransferase 4 family. MraY subfamily. The cofactor is Mg(2+).

The protein localises to the cell inner membrane. The enzyme catalyses UDP-N-acetyl-alpha-D-muramoyl-L-alanyl-gamma-D-glutamyl-meso-2,6-diaminopimeloyl-D-alanyl-D-alanine + di-trans,octa-cis-undecaprenyl phosphate = di-trans,octa-cis-undecaprenyl diphospho-N-acetyl-alpha-D-muramoyl-L-alanyl-D-glutamyl-meso-2,6-diaminopimeloyl-D-alanyl-D-alanine + UMP. The protein operates within cell wall biogenesis; peptidoglycan biosynthesis. Functionally, catalyzes the initial step of the lipid cycle reactions in the biosynthesis of the cell wall peptidoglycan: transfers peptidoglycan precursor phospho-MurNAc-pentapeptide from UDP-MurNAc-pentapeptide onto the lipid carrier undecaprenyl phosphate, yielding undecaprenyl-pyrophosphoryl-MurNAc-pentapeptide, known as lipid I. This Granulibacter bethesdensis (strain ATCC BAA-1260 / CGDNIH1) protein is Phospho-N-acetylmuramoyl-pentapeptide-transferase.